The primary structure comprises 159 residues: Cyclic pyranopterin monophosphate synthase (159 aa).

Substrate-binding positions include 75-77 (LCH) and 113-114 (ME). Asp-128 is a catalytic residue.

The protein belongs to the MoaC family. Homohexamer; trimer of dimers.

It carries out the reaction (8S)-3',8-cyclo-7,8-dihydroguanosine 5'-triphosphate = cyclic pyranopterin phosphate + diphosphate. Its pathway is cofactor biosynthesis; molybdopterin biosynthesis. In terms of biological role, catalyzes the conversion of (8S)-3',8-cyclo-7,8-dihydroguanosine 5'-triphosphate to cyclic pyranopterin monophosphate (cPMP). The polypeptide is Cyclic pyranopterin monophosphate synthase (Photorhabdus laumondii subsp. laumondii (strain DSM 15139 / CIP 105565 / TT01) (Photorhabdus luminescens subsp. laumondii)).